Consider the following 159-residue polypeptide: Phosphopantetheine adenylyltransferase (159 aa).

Threonine 9 is a binding site for substrate. ATP contacts are provided by residues 9-10 (TF) and histidine 17. Residues lysine 41, leucine 73, and arginine 87 each contribute to the substrate site. Residues 88–90 (GLR), glutamate 98, and 123–129 (YSFISST) contribute to the ATP site.

This sequence belongs to the bacterial CoaD family. Homohexamer. It depends on Mg(2+) as a cofactor.

The protein resides in the cytoplasm. The enzyme catalyses (R)-4'-phosphopantetheine + ATP + H(+) = 3'-dephospho-CoA + diphosphate. Its pathway is cofactor biosynthesis; coenzyme A biosynthesis; CoA from (R)-pantothenate: step 4/5. Functionally, reversibly transfers an adenylyl group from ATP to 4'-phosphopantetheine, yielding dephospho-CoA (dPCoA) and pyrophosphate. The protein is Phosphopantetheine adenylyltransferase of Pseudomonas aeruginosa (strain LESB58).